A 555-amino-acid polypeptide reads, in one-letter code: CTP synthase (555 aa).

Residues 1-267 (MAKFVFVTGG…CKEVLDCLDL (267 aa)) are amidoligase domain. S13 contacts CTP. S13 serves as a coordination point for UTP. ATP contacts are provided by residues 14–19 (SIGKGI) and D71. Residues D71 and E141 each contribute to the Mg(2+) site. CTP-binding positions include 148–150 (DIE), 188–193 (KTKPTQ), and K224. Residues 188-193 (KTKPTQ) and K224 contribute to the UTP site. The 243-residue stretch at 292–534 (KVALVGKYVQ…IQAAQIRVPS (243 aa)) folds into the Glutamine amidotransferase type-1 domain. L-glutamine is bound at residue G354. Catalysis depends on C381, which acts as the Nucleophile; for glutamine hydrolysis. L-glutamine is bound by residues 382–385 (LGMQ), E405, and R462. Active-site residues include H507 and E509. The segment at 536-555 (PSEAFNPQSKIIEKKSLEQQ) is disordered. Basic and acidic residues predominate over residues 546–555 (IIEKKSLEQQ).

This sequence belongs to the CTP synthase family. Homotetramer.

The enzyme catalyses UTP + L-glutamine + ATP + H2O = CTP + L-glutamate + ADP + phosphate + 2 H(+). It carries out the reaction L-glutamine + H2O = L-glutamate + NH4(+). It catalyses the reaction UTP + NH4(+) + ATP = CTP + ADP + phosphate + 2 H(+). The protein operates within pyrimidine metabolism; CTP biosynthesis via de novo pathway; CTP from UDP: step 2/2. Its activity is regulated as follows. Allosterically activated by GTP, when glutamine is the substrate; GTP has no effect on the reaction when ammonia is the substrate. The allosteric effector GTP functions by stabilizing the protein conformation that binds the tetrahedral intermediate(s) formed during glutamine hydrolysis. Inhibited by the product CTP, via allosteric rather than competitive inhibition. Catalyzes the ATP-dependent amination of UTP to CTP with either L-glutamine or ammonia as the source of nitrogen. Regulates intracellular CTP levels through interactions with the four ribonucleotide triphosphates. The chain is CTP synthase from Prochlorococcus marinus (strain NATL1A).